The following is a 538-amino-acid chain: Tryptophan 7-halogenase PrnA (538 aa).

8 residues coordinate FAD: Gly-13, Thr-15, Ala-16, Ser-39, Ile-42, Ile-45, Glu-49, and Ala-50. Lys-79 is a catalytic residue. Residue Lys-79 coordinates 7-chloro-L-tryptophan. FAD is bound by residues Val-187 and Leu-337. 7-chloro-L-tryptophan is bound at residue Glu-346. Glu-346 provides a ligand contact to L-tryptophan. Chloride contacts are provided by Thr-348 and Gly-349. FAD is bound at residue Ile-350. 4 residues coordinate 7-chloro-L-tryptophan: Tyr-443, Tyr-444, Glu-450, and Phe-454. The L-tryptophan site is built by Tyr-443, Tyr-444, Glu-450, and Phe-454.

Belongs to the flavin-dependent halogenase family. Bacterial tryptophan halogenase subfamily. Homodimer.

The catalysed reaction is L-tryptophan + FADH2 + chloride + O2 = 7-chloro-L-tryptophan + FAD + 2 H2O. It participates in antibiotic biosynthesis. Involved in the biosynthesis of the antifungal antibiotic pyrrolnitrin. Catalyzes the chlorination of tryptophan (Trp) at C7 position to yield 7-chloro-L-tryptophan (7-CLT). This chain is Tryptophan 7-halogenase PrnA, found in Pseudomonas fluorescens.